Reading from the N-terminus, the 219-residue chain is Large ribosomal subunit protein uL29m (219 aa).

The disordered stretch occupies residues 77-97 (ASKYPLPKPVSPEKLEKREST). Residues 87-97 (SPEKLEKREST) are compositionally biased toward basic and acidic residues.

This sequence belongs to the universal ribosomal protein uL29 family. As to quaternary structure, component of the mitochondrial large ribosomal subunit. Mature mitochondrial ribosomes consist of a small (37S) and a large (54S) subunit. The 37S subunit contains at least 33 different proteins and 1 molecule of RNA (15S). The 54S subunit contains at least 45 different proteins and 1 molecule of RNA (21S).

Its subcellular location is the mitochondrion. This chain is Large ribosomal subunit protein uL29m (mrpl4), found in Emericella nidulans (strain FGSC A4 / ATCC 38163 / CBS 112.46 / NRRL 194 / M139) (Aspergillus nidulans).